Reading from the N-terminus, the 194-residue chain is Probable DNA-directed RNA polymerase subunit delta (194 aa).

An HTH HARE-type domain is found at 14 to 83 (LSMIEVARAI…GENKWGLRSW (70 aa)). Residues 117–194 (GDEDAIDYSD…SDDEEDEEGE (78 aa)) are disordered.

It belongs to the RpoE family. As to quaternary structure, RNAP is composed of a core of 2 alpha, a beta and a beta' subunits. The core is associated with a delta subunit and one of several sigma factors.

Participates in both the initiation and recycling phases of transcription. In the presence of the delta subunit, RNAP displays an increased specificity of transcription, a decreased affinity for nucleic acids, and an increased efficiency of RNA synthesis because of enhanced recycling. The polypeptide is Probable DNA-directed RNA polymerase subunit delta (Streptococcus mutans serotype c (strain ATCC 700610 / UA159)).